The sequence spans 121 residues: Flagellar protein FliT (121 aa).

Positions 1–50 (MNHAPHLYFAWQQLVEKSQLMLRLATEEQWDELIASEMAYVNAVQEIAHL) are required for homodimerization. The segment at 60-98 (MQEQLRPMLRLILDNESKVKQLLQIRMDELAKLVGQSSV) is fliD binding.

The protein belongs to the FliT family. In terms of assembly, homodimer. Interacts with FliD and FlhC.

It is found in the cytoplasm. The protein resides in the cytosol. Functionally, dual-function protein that regulates the transcription of class 2 flagellar operons and that also acts as an export chaperone for the filament-capping protein FliD. As a transcriptional regulator, acts as an anti-FlhDC factor; it directly binds FlhC, thus inhibiting the binding of the FlhC/FlhD complex to class 2 promoters, resulting in decreased expression of class 2 flagellar operons. As a chaperone, effects FliD transition to the membrane by preventing its premature polymerization, and by directing it to the export apparatus. The protein is Flagellar protein FliT of Escherichia coli O8 (strain IAI1).